Here is a 364-residue protein sequence, read N- to C-terminus: CCA-adding enzyme (364 aa).

2 residues coordinate ATP: Gly-19 and Arg-22. CTP is bound by residues Gly-19 and Arg-22. Residues Asp-32 and Asp-34 each contribute to the Mg(2+) site. ATP contacts are provided by Arg-102, Arg-148, and Arg-151. Positions 102, 148, and 151 each coordinate CTP.

The protein belongs to the tRNA nucleotidyltransferase/poly(A) polymerase family. Bacterial CCA-adding enzyme type 2 subfamily. It depends on Mg(2+) as a cofactor.

It catalyses the reaction a tRNA precursor + 2 CTP + ATP = a tRNA with a 3' CCA end + 3 diphosphate. The catalysed reaction is a tRNA with a 3' CCA end + 2 CTP + ATP = a tRNA with a 3' CCACCA end + 3 diphosphate. Catalyzes the addition and repair of the essential 3'-terminal CCA sequence in tRNAs without using a nucleic acid template. Adds these three nucleotides in the order of C, C, and A to the tRNA nucleotide-73, using CTP and ATP as substrates and producing inorganic pyrophosphate. tRNA 3'-terminal CCA addition is required both for tRNA processing and repair. Also involved in tRNA surveillance by mediating tandem CCA addition to generate a CCACCA at the 3' terminus of unstable tRNAs. While stable tRNAs receive only 3'-terminal CCA, unstable tRNAs are marked with CCACCA and rapidly degraded. The sequence is that of CCA-adding enzyme from Bordetella pertussis (strain Tohama I / ATCC BAA-589 / NCTC 13251).